The chain runs to 395 residues: Peptide-N(4)-(N-acetyl-beta-glucosaminyl)asparagine amidase (395 aa).

4 residues coordinate Zn(2+): Cys131, Cys134, Cys172, and Cys175. The active-site Nucleophile is the Cys198. Active-site residues include His232 and Asp249. Substrate is bound at residue Glu252. Residues 363–395 are disordered; that stretch reads PELTKTTPSTDLPSGRQSGSTEWTKSRGENGES. Residues 366–385 show a composition bias toward polar residues; it reads TKTTPSTDLPSGRQSGSTEW. Residues 386-395 show a composition bias toward basic and acidic residues; the sequence is TKSRGENGES.

It belongs to the transglutaminase-like superfamily. PNGase family. It depends on Zn(2+) as a cofactor.

It is found in the cytoplasm. The enzyme catalyses Hydrolysis of an N(4)-(acetyl-beta-D-glucosaminyl)asparagine residue in which the glucosamine residue may be further glycosylated, to yield a (substituted) N-acetyl-beta-D-glucosaminylamine and a peptide containing an aspartate residue.. Its function is as follows. Specifically deglycosylates the denatured form of N-linked glycoproteins in the cytoplasm and assists their proteasome-mediated degradation. Cleaves the beta-aspartyl-glucosamine (GlcNAc) of the glycan and the amide side chain of Asn, converting Asn to Asp. Prefers proteins containing high-mannose over those bearing complex type oligosaccharides. Can recognize misfolded proteins in the endoplasmic reticulum that are exported to the cytosol to be destroyed and deglycosylate them, while it has no activity toward native proteins. Deglycosylation is a prerequisite for subsequent proteasome-mediated degradation of some, but not all, misfolded glycoproteins. The polypeptide is Peptide-N(4)-(N-acetyl-beta-glucosaminyl)asparagine amidase (PNG1) (Candida albicans (strain SC5314 / ATCC MYA-2876) (Yeast)).